We begin with the raw amino-acid sequence, 460 residues long: Armadillo repeat-containing protein LFR (460 aa).

The span at 1 to 10 (MSHVRSAPAG) shows a compositional bias: low complexity. The interval 1–32 (MSHVRSAPAGKSGGGGGSTPAKRGRPFGSTTG) is disordered. ARM repeat units follow at residues 225 to 267 (ENET…NLAP), 321 to 360 (NEPF…NVAE), and 364 to 405 (DFRL…SLVS).

As to quaternary structure, interacts with CHR719, SWI3A and SWI3C. As to expression, expressed at low levels in coleoptiles, leaf tongues, mature leaves and nodes during the vegetative phase. Highly expressed in reproductive tissues such as young panicles, early developing seeds, embryos and endosperms.

It is found in the nucleus. In terms of biological role, plays critical roles in both embryo and endosperm development. Required for free nuclei division and cellularization in early endosperm development, by preventing premature cell death in the endosperm. Involved in the regulation of pattern formation and organ differentiation during embryogenesis, by regulating genes involved in the early stages of seed development. The sequence is that of Armadillo repeat-containing protein LFR from Oryza sativa subsp. japonica (Rice).